Here is a 723-residue protein sequence, read N- to C-terminus: Catalase-peroxidase (723 aa).

The tryptophyl-tyrosyl-methioninium (Trp-Tyr) (with M-251) cross-link spans 96 to 225 (WHAAGSYRVA…LAAVMMGLIY (130 aa)). The active-site Proton acceptor is the His-97. Positions 225 to 251 (YVNPEGVDGNPDPLKTAEDVRVTFARM) form a cross-link, tryptophyl-tyrosyl-methioninium (Tyr-Met) (with W-96). His-266 is a heme b binding site.

It belongs to the peroxidase family. Peroxidase/catalase subfamily. Homodimer or homotetramer. Heme b serves as cofactor. Post-translationally, formation of the three residue Trp-Tyr-Met cross-link is important for the catalase, but not the peroxidase activity of the enzyme.

It catalyses the reaction H2O2 + AH2 = A + 2 H2O. The catalysed reaction is 2 H2O2 = O2 + 2 H2O. Its function is as follows. Bifunctional enzyme with both catalase and broad-spectrum peroxidase activity. The sequence is that of Catalase-peroxidase from Alkalilimnicola ehrlichii (strain ATCC BAA-1101 / DSM 17681 / MLHE-1).